The sequence spans 799 residues: Phospholipase A-2-activating protein (799 aa).

WD repeat units lie at residues 21–62, 69–113, 116–154, 155–194, 196–233, 235–274, and 276–314; these read GHEL…RGFI, GHSN…PLYT, GHKN…MTLQ, GHTA…MTFL, HEDC…LQIY, GHTN…QTIR, and PAQS…ASIE. One can recognise a PFU domain in the interval 372 to 471; it reads QWSTGEGRWM…AGQTPSTNLG (100 aa). Residues 537 to 798 enclose the PUL domain; the sequence is AYFPKTKPVT…NECCRLLLNM (262 aa). 6 ARM repeats span residues 550–592, 593–624, 625–673, 674–719, 720–759, and 760–799; these read ANPS…NPSG, GTVT…LRIS, IKNP…SFFC, DPGS…CLHK, VSDI…LISG, and DTNA…LNML.

It belongs to the WD repeat PLAP family.

It is found in the nucleus. Its subcellular location is the cytoplasm. It localises to the synapse. Its function is as follows. Plays a role in protein ubiquitination, sorting and degradation through its association with VCP. Involved in ubiquitin-mediated membrane proteins trafficking to late endosomes in an ESCRT-dependent manner, and hence plays a role in synaptic vesicle recycling. May play a role in macroautophagy, regulating for instance the clearance of damaged lysosomes. Plays a role in cerebellar Purkinje cell development. Positively regulates cytosolic and calcium-independent phospholipase A2 activities in a tumor necrosis factor alpha (TNF-alpha)- or lipopolysaccharide (LPS)-dependent manner, and hence prostaglandin E2 biosynthesis. This chain is Phospholipase A-2-activating protein (plaa), found in Xenopus laevis (African clawed frog).